Consider the following 549-residue polypeptide: Myotubularin-related protein 9 (549 aa).

Met-1 carries the N-acetylmethionine modification. The GRAM domain maps to 4 to 99 (AELIKTPRVD…LNIASSIEAL (96 aa)). A Myotubularin phosphatase domain is found at 123-498 (GWHSFLPEQE…QSLPLWEGIF (376 aa)). The stretch at 508 to 542 (LDEAYEEMVNIIEYNKELQAKVNILRRQLAELETE) forms a coiled coil. Phosphoserine is present on Ser-548.

This sequence belongs to the protein-tyrosine phosphatase family. Non-receptor class myotubularin subfamily. Homodimer. Heterodimer (via C-terminus) with lipid phosphatase MTMR6 (via C-terminus). Heterodimer (via coiled coil domain) with lipid phosphatase MTMR7 (via C-terminus). Heterodimer with lipid phosphatase MTMR8. As to expression, expressed in many tissues.

It is found in the cytoplasm. The protein localises to the cell projection. It localises to the ruffle membrane. Its subcellular location is the perinuclear region. The protein resides in the endoplasmic reticulum. Functionally, acts as an adapter for myotubularin-related phosphatases. Increases lipid phosphatase MTMR6 catalytic activity, specifically towards phosphatidylinositol 3,5-bisphosphate and MTMR6 binding affinity for phosphorylated phosphatidylinositols. Positively regulates lipid phosphatase MTMR7 catalytic activity. Increases MTMR8 catalytic activity towards phosphatidylinositol 3-phosphate. The formation of the MTMR6-MTMR9 complex, stabilizes both MTMR6 and MTMR9 protein levels. Stabilizes MTMR8 protein levels. Plays a role in the late stages of macropinocytosis possibly by regulating MTMR6-mediated dephosphorylation of phosphatidylinositol 3-phosphate in membrane ruffles. Negatively regulates autophagy, in part via its association with MTMR8. Negatively regulates DNA damage-induced apoptosis, in part via its association with MTMR6. Does not bind mono-, di- and tri-phosphorylated phosphatidylinositols, phosphatidic acid and phosphatidylserine. The sequence is that of Myotubularin-related protein 9 (MTMR9) from Homo sapiens (Human).